A 464-amino-acid chain; its full sequence is Trigger factor (464 aa).

The PPIase FKBP-type domain maps to 169–256; the sequence is GDVAIVDYRG…MKELKAKELP (88 aa).

The protein belongs to the FKBP-type PPIase family. Tig subfamily.

It localises to the cytoplasm. It catalyses the reaction [protein]-peptidylproline (omega=180) = [protein]-peptidylproline (omega=0). In terms of biological role, involved in protein export. Acts as a chaperone by maintaining the newly synthesized protein in an open conformation. Functions as a peptidyl-prolyl cis-trans isomerase. This is Trigger factor from Microcystis aeruginosa (strain NIES-843 / IAM M-2473).